The sequence spans 129 residues: Glutaredoxin-like protein ECU08_1380 (129 aa).

The Glutaredoxin domain occupies 26–126 (EADYGEMVRR…PLLTQNREPV (101 aa)).

The protein belongs to the glutaredoxin family.

Its subcellular location is the cytoplasm. In terms of biological role, has a glutathione-disulfide oxidoreductase activity in the presence of NADPH and glutathione reductase. Reduces low molecular weight disulfides and proteins. In Encephalitozoon cuniculi (strain GB-M1) (Microsporidian parasite), this protein is Glutaredoxin-like protein ECU08_1380.